An 829-amino-acid chain; its full sequence is Outer dense fiber protein 2 (829 aa).

Phosphoserine occurs at positions 73 and 74. Thr92 is modified (phosphothreonine). At Ser95 the chain carries Phosphoserine; by TSSK4. A phosphoserine mark is found at Ser106 and Ser109. At Thr110 the chain carries Phosphothreonine. 2 positions are modified to phosphoserine: Ser115 and Ser129. Lys138 is covalently cross-linked (Glycyl lysine isopeptide (Lys-Gly) (interchain with G-Cter in SUMO2)). Phosphoserine is present on Ser139. The stretch at 144–217 (QKGERQMAKR…MSKLVEAEMD (74 aa)) forms a coiled coil. A Phosphothreonine modification is found at Thr231. Coiled coils occupy residues 245–423 (DINT…AEQL) and 461–798 (EIIV…NYVQ). Phosphoserine is present on Ser261. Residues 392–413 (KQKGDRDKESLKKAIRAQKERA) are disordered. The segment at 537-701 (KNYEGMIDNY…EAIHQSQLRL (165 aa)) is interaction with BBOF1. Ser632 is subject to Phosphoserine.

The protein belongs to the ODF2 family. As to quaternary structure, self-associates. Associates with microtubules and forms a fibrillar structure partially linked to the microtubule network. Interacts via its C-terminus with PLK1. Interacts with ODF1. Interacts with MARK4; the interaction is required for localization of ODF2 to centrioles. Interacts with TSSK4. Interacts with AKNA. Interacts with QRICH2. Interacts with CFAP58. Interacts with BBOF1. Interacts with CCDC38. Interacts with CCDC42. Post-translationally, tyrosine phosphorylated. Phosphorylated by TSSK4 on Ser-95. Testis-specific (at protein level). Highly expressed in cytoplasm of step 2 round spermatids. Detected in the middle piece and extends to about half the principal piece of the sperm tails.

The protein localises to the cytoplasm. It localises to the cytoskeleton. Its subcellular location is the microtubule organizing center. The protein resides in the centrosome. It is found in the cell projection. The protein localises to the cilium. It localises to the centriole. Its subcellular location is the spindle pole. The protein resides in the flagellum. Functionally, seems to be a major component of sperm tail outer dense fibers (ODF). ODFs are filamentous structures located on the outside of the axoneme in the midpiece and principal piece of the mammalian sperm tail and may help to maintain the passive elastic structures and elastic recoil of the sperm tail. May have a modulating influence on sperm motility. Functions as a general scaffold protein that is specifically localized at the distal/subdistal appendages of mother centrioles. Component of the centrosome matrix required for the localization of PLK1 and NIN to the centrosomes. Required for the formation and/or maintenance of normal CETN1 assembly. In Homo sapiens (Human), this protein is Outer dense fiber protein 2 (ODF2).